Here is a 175-residue protein sequence, read N- to C-terminus: Large ribosomal subunit protein uL16 (175 aa).

The protein belongs to the universal ribosomal protein uL16 family.

The polypeptide is Large ribosomal subunit protein uL16 (Metallosphaera sedula (strain ATCC 51363 / DSM 5348 / JCM 9185 / NBRC 15509 / TH2)).